A 135-amino-acid chain; its full sequence is ATP synthase epsilon chain, chloroplastic (135 aa).

It belongs to the ATPase epsilon chain family. In terms of assembly, F-type ATPases have 2 components, CF(1) - the catalytic core - and CF(0) - the membrane proton channel. CF(1) has five subunits: alpha(3), beta(3), gamma(1), delta(1), epsilon(1). CF(0) has three main subunits: a, b and c.

The protein resides in the plastid. It localises to the chloroplast thylakoid membrane. In terms of biological role, produces ATP from ADP in the presence of a proton gradient across the membrane. This Euglena gracilis protein is ATP synthase epsilon chain, chloroplastic.